The primary structure comprises 357 residues: DNA replication and repair protein RecF (357 aa).

ATP is bound at residue 30–37 (GANGSGKT).

This sequence belongs to the RecF family.

It localises to the cytoplasm. The RecF protein is involved in DNA metabolism; it is required for DNA replication and normal SOS inducibility. RecF binds preferentially to single-stranded, linear DNA. It also seems to bind ATP. The sequence is that of DNA replication and repair protein RecF from Escherichia fergusonii (strain ATCC 35469 / DSM 13698 / CCUG 18766 / IAM 14443 / JCM 21226 / LMG 7866 / NBRC 102419 / NCTC 12128 / CDC 0568-73).